We begin with the raw amino-acid sequence, 92 residues long: Movement protein (92 aa).

The helical transmembrane segment at 38–58 (VIALVVILVSVGVFYLAYTLF) threads the bilayer.

The protein belongs to the mastrevirus movement protein family. As to quaternary structure, interacts with the capsid protein (CP). Part of a MP-CP-viral DNA complex.

It is found in the host membrane. In terms of biological role, involved in the viral transport within, and between cells. The polypeptide is Movement protein (Phaseolus vulgaris (Kidney bean)).